Reading from the N-terminus, the 264-residue chain is Caffeoyl-CoA O-methyltransferase 2 (264 aa).

Residues 1–20 (MATTATEATKTTAPAQEQQA) are compositionally biased toward low complexity. The tract at residues 1–37 (MATTATEATKTTAPAQEQQANGNGNGEQKTRHSEVGH) is disordered. Residues 28 to 37 (QKTRHSEVGH) are compositionally biased toward basic and acidic residues. Residue Lys38 coordinates substrate. S-adenosyl-L-methionine contacts are provided by residues Thr80, Glu102, 104–105 (GV), Ser110, Asp128, and Ala157. Residue Asp180 participates in substrate binding. Asp180 lines the a divalent metal cation pocket. Position 182 (Asp182) interacts with S-adenosyl-L-methionine. 2 residues coordinate a divalent metal cation: Asp206 and Asn207. Asn211 contributes to the substrate binding site.

Belongs to the class I-like SAM-binding methyltransferase superfamily. Cation-dependent O-methyltransferase family. CCoAMT subfamily. The cofactor is a divalent metal cation.

The enzyme catalyses (E)-caffeoyl-CoA + S-adenosyl-L-methionine = (E)-feruloyl-CoA + S-adenosyl-L-homocysteine + H(+). The protein operates within aromatic compound metabolism; phenylpropanoid biosynthesis. Functionally, methylates caffeoyl-CoA to feruloyl-CoA and 5-hydroxyferuloyl-CoA to sinapoyl-CoA. Plays a role in the synthesis of feruloylated polysaccharides. Involved in the reinforcement of the plant cell wall. Also involved in the responding to wounding or pathogen challenge by the increased formation of cell wall-bound ferulic acid polymers. The polypeptide is Caffeoyl-CoA O-methyltransferase 2 (CCOAOMT2) (Zea mays (Maize)).